Reading from the N-terminus, the 360-residue chain is Phosphoserine aminotransferase (360 aa).

R41 lines the L-glutamate pocket. 4 residues coordinate pyridoxal 5'-phosphate: W101, T152, D172, and Q195. K196 is subject to N6-(pyridoxal phosphate)lysine. 237–238 (NT) is a binding site for pyridoxal 5'-phosphate.

It belongs to the class-V pyridoxal-phosphate-dependent aminotransferase family. SerC subfamily. Homodimer. It depends on pyridoxal 5'-phosphate as a cofactor.

The protein localises to the cytoplasm. It carries out the reaction O-phospho-L-serine + 2-oxoglutarate = 3-phosphooxypyruvate + L-glutamate. The enzyme catalyses 4-(phosphooxy)-L-threonine + 2-oxoglutarate = (R)-3-hydroxy-2-oxo-4-phosphooxybutanoate + L-glutamate. It participates in amino-acid biosynthesis; L-serine biosynthesis; L-serine from 3-phospho-D-glycerate: step 2/3. Its pathway is cofactor biosynthesis; pyridoxine 5'-phosphate biosynthesis; pyridoxine 5'-phosphate from D-erythrose 4-phosphate: step 3/5. In terms of biological role, catalyzes the reversible conversion of 3-phosphohydroxypyruvate to phosphoserine and of 3-hydroxy-2-oxo-4-phosphonooxybutanoate to phosphohydroxythreonine. This Burkholderia cenocepacia (strain HI2424) protein is Phosphoserine aminotransferase.